The primary structure comprises 609 residues: Non-structural glycoprotein (609 aa).

An N-terminal signal peptide occupies residues 1-24 (MDFLRQCTLIQVMILAITIRLTHG). The Extracellular segment spans residues 25–581 (GWTNFPESCV…EKDYWHEEYN (557 aa)). Residues N87, N375, N465, N472, N478, N506, N529, N551, and N562 are each glycosylated (N-linked (GlcNAc...) asparagine; by host). The helical transmembrane segment at 582 to 599 (MWGLSGLSFLLLLALFYN) threads the bilayer. At 600-609 (KIKRKIKRKS) the chain is on the cytoplasmic side.

Belongs to the ephemerovirus glycoprotein family.

Its subcellular location is the membrane. In Adelaide River virus (ARV), this protein is Non-structural glycoprotein (GNS).